We begin with the raw amino-acid sequence, 184 residues long: MDLSSLRPAKGAVKGRKRVGRGPGSGNGTTAGKGNKGQQSRSGYTRPVTEGGQMPMYRRLPKFGFTPPNKKSVACVNLAQIQMWIEKGLVGEEISVLDLKHLCNASNQDYFKILGNGEFESAVTITAHFFSKSAVEKIEKAGGKTVTAYRTLEEASKVNGLPFEEALLTPKAPVLKKKKKSDKS.

The disordered stretch occupies residues 1–62; sequence MDLSSLRPAK…QMPMYRRLPK (62 aa). The segment covering 21 to 35 has biased composition (gly residues); sequence RGPGSGNGTTAGKGN.

This sequence belongs to the universal ribosomal protein uL15 family. In terms of assembly, part of the 50S ribosomal subunit.

Its function is as follows. Binds to the 23S rRNA. This is Large ribosomal subunit protein uL15 from Chlorobaculum parvum (strain DSM 263 / NCIMB 8327) (Chlorobium vibrioforme subsp. thiosulfatophilum).